We begin with the raw amino-acid sequence, 509 residues long: Ribonuclease Y (509 aa).

A helical membrane pass occupies residues 5 to 25 (IIILLSVFCGIFFICFIICSS). The region spanning 199–259 (TTNIVKLPSD…IRREIATRTL (61 aa)) is the KH domain. The 94-residue stretch at 325–418 (VLAHSIEVAK…VAIADSISAS (94 aa)) folds into the HD domain.

This sequence belongs to the RNase Y family.

It localises to the cell membrane. Functionally, endoribonuclease that initiates mRNA decay. The sequence is that of Ribonuclease Y from Mycoplasma mycoides subsp. mycoides SC (strain CCUG 32753 / NCTC 10114 / PG1).